A 168-amino-acid chain; its full sequence is Endoribonuclease YbeY (168 aa).

Residues H128, H132, and H138 each coordinate Zn(2+).

This sequence belongs to the endoribonuclease YbeY family. The cofactor is Zn(2+).

It is found in the cytoplasm. Single strand-specific metallo-endoribonuclease involved in late-stage 70S ribosome quality control and in maturation of the 3' terminus of the 16S rRNA. This chain is Endoribonuclease YbeY, found in Sphingopyxis alaskensis (strain DSM 13593 / LMG 18877 / RB2256) (Sphingomonas alaskensis).